We begin with the raw amino-acid sequence, 171 residues long: Transcription antitermination protein NusB (171 aa).

The protein belongs to the NusB family.

Its function is as follows. Involved in transcription antitermination. Required for transcription of ribosomal RNA (rRNA) genes. Binds specifically to the boxA antiterminator sequence of the ribosomal RNA (rrn) operons. This Brucella ovis (strain ATCC 25840 / 63/290 / NCTC 10512) protein is Transcription antitermination protein NusB.